The chain runs to 20 residues: Methyl-coenzyme M reductase subunit gamma (20 aa).

Residues 1–20 (AYERQFYPGATSVAENNIGH) are disordered.

Belongs to the methyl-coenzyme M reductase gamma subunit family. As to quaternary structure, MCR from M.thermophila is a heterotrimer composed of an alpha, a beta, and a gamma subunit. Coenzyme F430 is required as a cofactor.

The protein localises to the cytoplasm. It carries out the reaction coenzyme B + methyl-coenzyme M = methane + coenzyme M-coenzyme B heterodisulfide. Its pathway is one-carbon metabolism; methyl-coenzyme M reduction; methane from methyl-coenzyme M: step 1/1. Component of the methyl-coenzyme M reductase (MCR) I that catalyzes the reductive cleavage of methyl-coenzyme M (CoM-S-CH3 or 2-(methylthio)ethanesulfonate) using coenzyme B (CoB or 7-mercaptoheptanoylthreonine phosphate) as reductant which results in the production of methane and the mixed heterodisulfide of CoB and CoM (CoM-S-S-CoB). This is the final step in methanogenesis. In Methanosarcina thermophila, this protein is Methyl-coenzyme M reductase subunit gamma.